The primary structure comprises 205 residues: Recombination protein RecR (205 aa).

The C4-type zinc-finger motif lies at 64-79 (CSRCYFITQGDLCAIC). A Toprim domain is found at 87-182 (RVICVVEEPL…RVTRLARGLP (96 aa)).

Belongs to the RecR family.

Functionally, may play a role in DNA repair. It seems to be involved in an RecBC-independent recombinational process of DNA repair. It may act with RecF and RecO. This Roseiflexus sp. (strain RS-1) protein is Recombination protein RecR.